The sequence spans 120 residues: Large ribosomal subunit protein uL18 (120 aa).

This sequence belongs to the universal ribosomal protein uL18 family. In terms of assembly, part of the 50S ribosomal subunit; part of the 5S rRNA/L5/L18/L25 subcomplex. Contacts the 5S and 23S rRNAs.

Its function is as follows. This is one of the proteins that bind and probably mediate the attachment of the 5S RNA into the large ribosomal subunit, where it forms part of the central protuberance. This chain is Large ribosomal subunit protein uL18, found in Exiguobacterium sp. (strain ATCC BAA-1283 / AT1b).